A 427-amino-acid polypeptide reads, in one-letter code: Glutamate-1-semialdehyde 2,1-aminomutase (427 aa).

At Lys265 the chain carries N6-(pyridoxal phosphate)lysine.

This sequence belongs to the class-III pyridoxal-phosphate-dependent aminotransferase family. HemL subfamily. As to quaternary structure, homodimer. Requires pyridoxal 5'-phosphate as cofactor.

It localises to the cytoplasm. It catalyses the reaction (S)-4-amino-5-oxopentanoate = 5-aminolevulinate. It functions in the pathway porphyrin-containing compound metabolism; protoporphyrin-IX biosynthesis; 5-aminolevulinate from L-glutamyl-tRNA(Glu): step 2/2. The sequence is that of Glutamate-1-semialdehyde 2,1-aminomutase from Neisseria meningitidis serogroup C / serotype 2a (strain ATCC 700532 / DSM 15464 / FAM18).